Here is a 230-residue protein sequence, read N- to C-terminus: MAKASLDKDPFDVASMFDDVGDKYDLTNTVLSFGQDRVWRRRTRERLDLKPGEKVLDLAAGTAVSTVELAKSGAWCVACDFSQGMLAAGKHRNVPMVVGDGMTLPFADNSFDAVTISYGLRNIHDFRAGLREMARVTKPGGRLTVAEFSTPVIPVFGTLYKEYLMRLLPKVARVVSSNPEAYIYLAESIRAWPDQEDLAREINANGWSDCGWQNLTFGIVAMHSAIKPGN.

Residues threonine 62, aspartate 80, 100–101, and serine 117 contribute to the S-adenosyl-L-methionine site; that span reads DG.

This sequence belongs to the class I-like SAM-binding methyltransferase superfamily. MenG/UbiE family.

It catalyses the reaction a 2-demethylmenaquinol + S-adenosyl-L-methionine = a menaquinol + S-adenosyl-L-homocysteine + H(+). The protein operates within quinol/quinone metabolism; menaquinone biosynthesis; menaquinol from 1,4-dihydroxy-2-naphthoate: step 2/2. Functionally, methyltransferase required for the conversion of demethylmenaquinol (DMKH2) to menaquinol (MKH2). In Corynebacterium efficiens (strain DSM 44549 / YS-314 / AJ 12310 / JCM 11189 / NBRC 100395), this protein is Demethylmenaquinone methyltransferase.